Consider the following 367-residue polypeptide: Glutamate 5-kinase (367 aa).

Lys17 lines the ATP pocket. 3 residues coordinate substrate: Ser57, Asp144, and Asn156. ATP contacts are provided by residues Ser176–Asp177 and Thr217–Lys223. In terms of domain architecture, PUA spans Ala279–Pro357.

Belongs to the glutamate 5-kinase family.

The protein resides in the cytoplasm. The catalysed reaction is L-glutamate + ATP = L-glutamyl 5-phosphate + ADP. It functions in the pathway amino-acid biosynthesis; L-proline biosynthesis; L-glutamate 5-semialdehyde from L-glutamate: step 1/2. In terms of biological role, catalyzes the transfer of a phosphate group to glutamate to form L-glutamate 5-phosphate. The chain is Glutamate 5-kinase from Mycolicibacterium paratuberculosis (strain ATCC BAA-968 / K-10) (Mycobacterium paratuberculosis).